The following is a 140-amino-acid chain: Small ribosomal subunit protein uS12m (140 aa).

The transit peptide at 1 to 30 directs the protein to the mitochondrion; sequence MNFLRQSFGITKQLASQAIQCSYETAVRGM.

The protein belongs to the universal ribosomal protein uS12 family.

The protein localises to the mitochondrion. This Drosophila melanogaster (Fruit fly) protein is Small ribosomal subunit protein uS12m (tko).